A 488-amino-acid polypeptide reads, in one-letter code: Bile acid receptor (488 aa).

Lys133 is covalently cross-linked (Glycyl lysine isopeptide (Lys-Gly) (interchain with G-Cter in SUMO1)). The nuclear receptor DNA-binding region spans 135-210; sequence DELCVVCGDR…MGMLAECMYT (76 aa). The segment at 138 to 158 adopts an NR C4-type zinc-finger fold; that stretch reads CVVCGDRASGYHYNALTCEGC. Phosphoserine; by PKC/PRKCA occurs at positions 146 and 165. At Lys168 the chain carries N6-acetyllysine; by EP300. The segment at 174–198 adopts an NR C4-type zinc-finger fold; it reads CKNGGNCVMDMYMRRKCQECRLRKC. Lys221 bears the N6-methyllysine; by SETD7 mark. Lys228 carries the N6-acetyllysine; by EP300 modification. An NR LBD domain is found at 264 to 488; it reads DQQTLLDYIM…PLLCEIWDVQ (225 aa). Lys291 is covalently cross-linked (Glycyl lysine isopeptide (Lys-Gly) (interchain with G-Cter in SUMO1)). Chenodeoxycholate contacts are provided by Arg347, Tyr377, and Tyr385. Thr458 carries the phosphothreonine; by PKC/PRKCZ modification. His463 lines the chenodeoxycholate pocket.

The protein belongs to the nuclear hormone receptor family. NR1 subfamily. Heterodimer with RXRA; the heterodimerization enhances the binding affinity for LXXLL motifs from coactivators. Binds DNA predominantly as a heterodimer with RXRA. After activation by agonist binding interacts with coactivators. Interacts with PPARGC1A, SMARCA4 and EP300. Interacts with NCOA1, NCOA2, CARM1, SETD7, PRMT1, GPS2, SMARCA4 and MED1. Interacts with XRCC5 and XRCC6; decreasing NR1H4/FXR transactivation activity towards ABCB11/BSEP. Interacts with PAGR1 and NCOA6; indicative for an association with an MLL2/MLL3 complex (ASCOM). Interacts with NR5A2. Post-translationally, acetylated by EP300. Lys-228 as is the major acetylation site for EP300; the dynamicly regulated acetylation inhibits heterodimerization with RXRA and transactivation activity. Deacetylated by SIRT1. Elevated acetylation levels are found in metabolic disease states (mouse models of obesity and type II diabetes). Methylation may increase transactivation of target genes. In terms of processing, phosphorylation by PKC/PRKCA increases transactivation activity by promoting association with PPARGC1A. Post-translationally, sumoylated upon ligand binding. In terms of tissue distribution, expressed in liver and kidney. Expressed in pancreatic beta cells and macrophages. Expressed in the villus epithelium in adult ileum, with highest expression in the intervillus regions. Expression in colon is reduced by inflammation.

The protein resides in the nucleus. Functionally, ligand-activated transcription factor. Receptor for bile acids (BAs) such as chenodeoxycholic acid (CDCA), lithocholic acid, deoxycholic acid (DCA) and allocholic acid (ACA). Plays a essential role in BA homeostasis through the regulation of genes involved in BA synthesis, conjugation and enterohepatic circulation. Also regulates lipid and glucose homeostasis and is involved in innate immune response. The FXR-RXR heterodimer binds predominantly to farnesoid X receptor response elements (FXREs) containing two inverted repeats of the consensus sequence 5'-AGGTCA-3' in which the monomers are spaced by 1 nucleotide (IR-1) but also to tandem repeat DR1 sites with lower affinity, and can be activated by either FXR or RXR-specific ligands. It is proposed that monomeric nuclear receptors such as NR5A2/LRH-1 bound to coregulatory nuclear responsive element (NRE) halfsites located in close proximity to FXREs modulate transcriptional activity. In the liver activates transcription of the corepressor NR0B2 thereby indirectly inhibiting CYP7A1 and CYP8B1 (involved in BA synthesis) implicating at least in part histone demethylase KDM1A resulting in epigenomic repression, and SLC10A1/NTCP (involved in hepatic uptake of conjugated BAs). Activates transcription of the repressor MAFG (involved in regulation of BA synthesis). Activates transcription of SLC27A5/BACS and BAAT (involved in BA conjugation), ABCB11/BSEP (involved in bile salt export) by directly recruiting histone methyltransferase CARM1, and ABCC2/MRP2 (involved in secretion of conjugated BAs) and ABCB4 (involved in secretion of phosphatidylcholine in the small intestine). In ileal enterocytes activates FABP6/IBABP (involved in cytosolic transport), SLC51A/OSTA and SLC51B/OSTB (involved in secretion of conjugated BAs to the portal blood), and repressor NR0B2/SHP thereby indirectly inhibiting SLC10A2/ASBT (involved in BA uptake). In the intestine activates FGF15 expression and secretion leading to hepatic CYP7A1 repression; the function also involves the coordinated induction of hepatic KLB/beta-klotho expression. Transcriptional activation of FABP6/IBAP and SCD1 but not of ABCB11 is isoform-specific. Regulates transcription of liver UGT2B4 and SULT2A1 involved in BA detoxification; binding to the UGT2B4 promoter seems to imply a monomeric transactivation independent of RXRA. Modulates lipid homeostasis by activating liver NR0B2/SHP-mediated repression of SREBF1 isoform SREBP-1C (involved in de novo lipogenesis), expression of PLTP (involved in HDL formation), SCARB1 (involved in HDL hepatic uptake), APOE, APOC1, APOC4, VLDLR and SDC1 (involved in the hepatic uptake of LDL and IDL remnants), and inhibiting expression of MTTP (involved in VLDL assembly). Increases expression of APOC2 (promoting lipoprotein lipase activity implicated in triglyceride clearance). Transrepresses APOA1 probably involving a monomeric competition with NR2A1 for binding to a DR1 element. Also reduces triglyceride clearance by inhibiting expression of ANGPTL3 and APOC3 (both involved in inhibition of lipoprotein lipase). Involved in glucose homeostasis by modulating hepatic gluconeogenesis through activation of NR0B2/SHP-mediated repression of respective genes. Modulates glycogen synthesis (inducing phosphorylation of glycogen synthase kinase-3). Modulates glucose-stimulated insulin secretion and is involved in insulin resistance. Involved in intestinal innate immunity. Plays a role in protecting the distal small intestine against bacterial overgrowth and preservation of the epithelial barrier. Down-regulates inflammatory cytokine expression in several types of immune cells including macrophages and mononuclear cells. Mediates transrepression of TLR4-induced cytokine expression; the function seems to require its sumoylation and prevents N-CoR nuclear receptor corepressor clearance from target genes such as IL1B and NOS2. Involved in the TLR9-mediated protective mechanism in intestinal inflammation. Plays a anti-inflammatory role in liver inflammation; proposed to inhibit pro-inflammatory (but not antiapoptotic) NF-kappa-B signaling. In terms of biological role, activates transcription of IBAP and SDC1. This Mus musculus (Mouse) protein is Bile acid receptor (Nr1h4).